The chain runs to 186 residues: Peptidyl-tRNA hydrolase (186 aa).

Tyrosine 13 contributes to the tRNA binding site. Residue histidine 18 is the Proton acceptor of the active site. Residues tyrosine 59, asparagine 61, and asparagine 107 each coordinate tRNA.

This sequence belongs to the PTH family. In terms of assembly, monomer.

It is found in the cytoplasm. It carries out the reaction an N-acyl-L-alpha-aminoacyl-tRNA + H2O = an N-acyl-L-amino acid + a tRNA + H(+). Its function is as follows. Hydrolyzes ribosome-free peptidyl-tRNAs (with 1 or more amino acids incorporated), which drop off the ribosome during protein synthesis, or as a result of ribosome stalling. Catalyzes the release of premature peptidyl moieties from peptidyl-tRNA molecules trapped in stalled 50S ribosomal subunits, and thus maintains levels of free tRNAs and 50S ribosomes. This Thermotoga sp. (strain RQ2) protein is Peptidyl-tRNA hydrolase.